A 190-amino-acid chain; its full sequence is MGIKEDNWIRKMAIEEGMIEPFADNQVKVHPETGEKLISYGLSSYGYDLRISREFKVFTNIYNSLVDPKCFTEDALISIVDDVCIIPPNSFALARSVEYFRIPRNVLTVCIGKSTYARCGLIVNVTPFEPEWEGYVTIEISNTTPLPAKIYANEGIAQVLFFEGDSACDVSYADRQGKYQKQQGITVPFV.

113–118 (KSTYAR) provides a ligand contact to dCTP. E139 functions as the Proton donor/acceptor in the catalytic mechanism. 4 residues coordinate dCTP: Q158, Y172, K181, and Q182.

It belongs to the dCTP deaminase family. As to quaternary structure, homotrimer.

It catalyses the reaction dCTP + H2O + H(+) = dUTP + NH4(+). It functions in the pathway pyrimidine metabolism; dUMP biosynthesis; dUMP from dCTP (dUTP route): step 1/2. In terms of biological role, catalyzes the deamination of dCTP to dUTP. The sequence is that of dCTP deaminase from Chlamydia muridarum (strain MoPn / Nigg).